A 196-amino-acid chain; its full sequence is MADPSGSHLRAVILAGGAGRRLGGVDKALLILHGRTMLDHAIATVSGQVGAVALSAAGDPARFARFGIPVLEDGRHRGKGPLAGVLAGMRWAAASGGETLLSLPVDTPFAPRDLAARLGAAPAVAASHGRTHHLVALWPVAAADALERFLDGPGPYRVSGFAAEIGMRAVAFADERDPFVNINTQADLDAAEAGRC.

GTP is bound by residues 14-16 (LAG), lysine 27, aspartate 73, and aspartate 106. Residue aspartate 106 coordinates Mg(2+).

It belongs to the MobA family. Monomer. The cofactor is Mg(2+).

The protein resides in the cytoplasm. The enzyme catalyses Mo-molybdopterin + GTP + H(+) = Mo-molybdopterin guanine dinucleotide + diphosphate. In terms of biological role, transfers a GMP moiety from GTP to Mo-molybdopterin (Mo-MPT) cofactor (Moco or molybdenum cofactor) to form Mo-molybdopterin guanine dinucleotide (Mo-MGD) cofactor. The polypeptide is Molybdenum cofactor guanylyltransferase (Acidiphilium cryptum (strain JF-5)).